The sequence spans 234 residues: 2,3-bisphosphoglycerate-dependent phosphoglycerate mutase (234 aa).

Substrate-binding positions include 8–15, 21–22, arginine 60, 87–90, lysine 98, 114–115, and 183–184; these read RHGESVWN, TG, ERHY, RR, and GN. The Tele-phosphohistidine intermediate role is filled by histidine 9. Glutamate 87 (proton donor/acceptor) is an active-site residue.

This sequence belongs to the phosphoglycerate mutase family. BPG-dependent PGAM subfamily. In terms of assembly, homodimer.

It carries out the reaction (2R)-2-phosphoglycerate = (2R)-3-phosphoglycerate. The protein operates within carbohydrate degradation; glycolysis; pyruvate from D-glyceraldehyde 3-phosphate: step 3/5. Catalyzes the interconversion of 2-phosphoglycerate and 3-phosphoglycerate. In Citrifermentans bemidjiense (strain ATCC BAA-1014 / DSM 16622 / JCM 12645 / Bem) (Geobacter bemidjiensis), this protein is 2,3-bisphosphoglycerate-dependent phosphoglycerate mutase.